The primary structure comprises 151 residues: Acidic phospholipase A2 6 (151 aa).

An N-terminal signal peptide occupies residues 1–27 (MYPAHLLVLLAVCVSLLGAASIPARPL). 7 cysteine pairs are disulfide-bonded: cysteine 38–cysteine 104, cysteine 54–cysteine 151, cysteine 56–cysteine 72, cysteine 71–cysteine 132, cysteine 78–cysteine 125, cysteine 88–cysteine 118, and cysteine 111–cysteine 123. Residues tyrosine 55, glycine 57, and glycine 59 each coordinate Ca(2+). Histidine 75 is a catalytic residue. Aspartate 76 lines the Ca(2+) pocket. The active site involves aspartate 126.

This sequence belongs to the phospholipase A2 family. Group I subfamily. D49 sub-subfamily. Requires Ca(2+) as cofactor. Expressed by the venom gland.

It is found in the secreted. The enzyme catalyses a 1,2-diacyl-sn-glycero-3-phosphocholine + H2O = a 1-acyl-sn-glycero-3-phosphocholine + a fatty acid + H(+). Its function is as follows. PLA2 catalyzes the calcium-dependent hydrolysis of the 2-acyl groups in 3-sn-phosphoglycerides. The polypeptide is Acidic phospholipase A2 6 (Tropidechis carinatus (Australian rough-scaled snake)).